Reading from the N-terminus, the 678-residue chain is Zinc finger protein 334 (678 aa).

Residues 8 to 79 form the KRAB domain; that stretch reads VSFQDLTVNF…EEFSNQNYPE (72 aa). 14 consecutive C2H2-type zinc fingers follow at residues 235 to 257, 263 to 285, 291 to 313, 319 to 341, 347 to 369, 375 to 397, 403 to 425, 431 to 453, 459 to 481, 542 to 564, 570 to 592, 598 to 620, 626 to 648, and 654 to 676; these read NEPCECRKTFSKRSTLVVHQRIH, YVCNDCRKTFRVKTSLTRHQRIH, YECSECGKTFIDKSALIVHQKIH, YECNECGKTFFRKSALAEHFRSH, YECKECGNAFSKKSYLVVHQRTH, NECKECGKTFFCQSALTAHQRIH, YECSECEKTFFCQSALNVHRRSH, YECSQCGKFLCTKSALIAHQITH, YECNECGKFFCHKSTLTIHQRTH, YECNECGRTYCRKSALTHHQRTH, YECNECGKTFCQKFSFVEHQRTH, YERNECGKSFCHKSAFRVHRRIH, YECNQCGKTYRRLWTLTEHQKIH, and YECNKCEKTFRHKSNFLLHQKSH.

This sequence belongs to the krueppel C2H2-type zinc-finger protein family.

The protein localises to the nucleus. May be involved in transcriptional regulation. This is Zinc finger protein 334 (ZNF334) from Pongo abelii (Sumatran orangutan).